The sequence spans 556 residues: Innexin-7 (556 aa).

A run of 3 helical transmembrane segments spans residues 21 to 41 (LVAS…AVLI), 127 to 147 (FFLL…KYFA), and 213 to 233 (AYYV…NVIL). Residue asparagine 267 is glycosylated (N-linked (GlcNAc...) asparagine). Residues 310-330 (IFVFLWAWYILLTAFTVGNLF) traverse the membrane as a helical segment. Residues 431–556 (DESQVESGKN…IPKTAEKKHW (126 aa)) are disordered. Over residues 435–447 (VESGKNTAPSTSH) the composition is skewed to polar residues. The span at 452–461 (RGTEQLEKNV) shows a compositional bias: basic and acidic residues. A compositionally biased stretch (polar residues) spans 463–474 (SRQGSLSTQLRP). The span at 500-513 (KGSKKPSPTKKKAS) shows a compositional bias: basic residues. A compositionally biased stretch (low complexity) spans 514–527 (SKNSPQSSSNSRRP). A compositionally biased stretch (basic and acidic residues) spans 539–556 (HHHEPDSKIPKTAEKKHW).

The protein belongs to the pannexin family.

It is found in the cell membrane. Its subcellular location is the cell junction. It localises to the gap junction. Its function is as follows. Structural component of the gap junctions. The protein is Innexin-7 (inx-7) of Caenorhabditis elegans.